The following is a 168-amino-acid chain: Cytochrome c oxidase subunit 2 (168 aa).

Residues 1 to 3 (MVD) are Cytoplasmic-facing. A helical transmembrane segment spans residues 4 to 38 (EHKAHKAILAYEKGWLAFSLAMLFVFIALIAYTLA). Residues 39–168 (THTAGVIPAG…NMFGTIVVKE (130 aa)) lie on the Periplasmic side of the membrane. The Cu cation site is built by His114, Cys149, Cys153, and His157.

The protein belongs to the cytochrome c oxidase subunit 2 family.

The protein resides in the cell membrane. The enzyme catalyses 4 Fe(II)-[cytochrome c] + O2 + 8 H(+)(in) = 4 Fe(III)-[cytochrome c] + 2 H2O + 4 H(+)(out). Functionally, subunits I and II form the functional core of the enzyme complex. Electrons originating in cytochrome c are transferred via heme a and Cu(A) to the binuclear center formed by heme a3 and Cu(B). The polypeptide is Cytochrome c oxidase subunit 2 (cbaB) (Thermus thermophilus (strain ATCC 27634 / DSM 579 / HB8)).